A 333-amino-acid chain; its full sequence is tRNA N6-adenosine threonylcarbamoyltransferase (333 aa).

Residues His110 and His114 each coordinate Fe cation. Substrate-binding positions include 133–137 (IVSGG), Asp166, Gly179, Asp183, and Asn275. Fe cation is bound at residue Asp302.

This sequence belongs to the KAE1 / TsaD family. Requires Fe(2+) as cofactor.

It is found in the cytoplasm. It catalyses the reaction L-threonylcarbamoyladenylate + adenosine(37) in tRNA = N(6)-L-threonylcarbamoyladenosine(37) in tRNA + AMP + H(+). In terms of biological role, required for the formation of a threonylcarbamoyl group on adenosine at position 37 (t(6)A37) in tRNAs that read codons beginning with adenine. Is involved in the transfer of the threonylcarbamoyl moiety of threonylcarbamoyl-AMP (TC-AMP) to the N6 group of A37, together with TsaE and TsaB. TsaD likely plays a direct catalytic role in this reaction. This chain is tRNA N6-adenosine threonylcarbamoyltransferase, found in Thermodesulfovibrio yellowstonii (strain ATCC 51303 / DSM 11347 / YP87).